Reading from the N-terminus, the 511-residue chain is Cytochrome P450 4B1 (511 aa).

Glu315 serves as a coordination point for heme. Ser436 carries the phosphoserine modification. Cys453 contacts heme.

This sequence belongs to the cytochrome P450 family. Heme is required as a cofactor. Detected in the liver and lung (at protein level).

The protein resides in the endoplasmic reticulum membrane. Its subcellular location is the microsome membrane. The catalysed reaction is an organic molecule + reduced [NADPH--hemoprotein reductase] + O2 = an alcohol + oxidized [NADPH--hemoprotein reductase] + H2O + H(+). Functionally, cytochromes P450 are a group of heme-thiolate monooxygenases. In liver microsomes, this enzyme is involved in an NADPH-dependent electron transport pathway. It oxidizes a variety of structurally unrelated compounds, including steroids, fatty acids, and xenobiotics. In Homo sapiens (Human), this protein is Cytochrome P450 4B1 (CYP4B1).